Consider the following 82-residue polypeptide: Beta-insect toxin AaBTxL1 (82 aa).

Residues 1 to 22 (MMKLVLFSVIVILFSLIGSIHG) form the signal peptide. Residues 25–82 (VPGNYPLDRSGKKYPCTITWKKNPSCIQICKKHGVKYGYCFDFQCWCEIFGRLKTFKI) form the LCN-type CS-alpha/beta domain. 3 cysteine pairs are disulfide-bonded: Cys-40/Cys-64, Cys-50/Cys-69, and Cys-54/Cys-71.

Belongs to the long (3 C-C) scorpion toxin superfamily. Sodium channel inhibitor family. Beta subfamily. In terms of tissue distribution, expressed by the venom gland.

The protein resides in the secreted. Its function is as follows. Shifts the voltage of activation of para/tipE voltage-dependent sodium channels (Nav) toward more negative potentials. The polypeptide is Beta-insect toxin AaBTxL1 (Androctonus australis (Sahara scorpion)).